The chain runs to 892 residues: Microsomal triglyceride transfer protein homolog (892 aa).

The signal sequence occupies residues 1–19 (MFSSRIWLLLAVTVGVCLA).

As to quaternary structure, heterodimer; heterodimerizes with protein disulfide isomerase.

Its subcellular location is the endoplasmic reticulum. Its function is as follows. Catalyzes the transport of cholesteryl ester, and phospholipid between phospholipid surfaces. Does not catalyze transport of triglycerides. Required for the assembly and secretion of plasma lipoproteins that contain apolipoprotein B. Required for normal expression of klf-3. In Caenorhabditis elegans, this protein is Microsomal triglyceride transfer protein homolog.